We begin with the raw amino-acid sequence, 384 residues long: UPF0496 protein At3g28310/At3g28320 (384 aa).

A coiled-coil region spans residues 184–215 (QESLFDRVTETKERIAKEIEEVQKRISNVNTA). A run of 2 helical transmembrane segments spans residues 217 to 237 (IVSHVVFGAAAFGYAAGCIAL) and 242 to 262 (VGAPLGAGMVTLLPVIVVQWV). Residues 264 to 361 (VNYVLNNSLE…TTKITEVCET (98 aa)) adopt a coiled-coil conformation.

Belongs to the UPF0496 family.

The protein resides in the membrane. In Arabidopsis thaliana (Mouse-ear cress), this protein is UPF0496 protein At3g28310/At3g28320.